A 147-amino-acid chain; its full sequence is Hemoglobin subunit beta (147 aa).

At Val-2 the chain carries N-acetylvaline. Residues 3-147 (HLTGEEKAAV…VANALAHKYH (145 aa)) form the Globin domain. Thr-13 bears the Phosphothreonine mark. Phosphoserine is present on Ser-45. N6-acetyllysine is present on Lys-60. Heme b is bound at residue His-64. N6-acetyllysine is present on Lys-83. Residue His-93 coordinates heme b. An S-nitrosocysteine modification is found at Cys-94. Lys-145 carries the post-translational modification N6-acetyllysine.

It belongs to the globin family. Heterotetramer of two alpha chains and two beta chains. As to expression, red blood cells.

Its function is as follows. Involved in oxygen transport from the lung to the various peripheral tissues. The sequence is that of Hemoglobin subunit beta (HBB) from Lagothrix lagotricha (Brown woolly monkey).